The following is a 1192-amino-acid chain: DNA topoisomerase 2 (1192 aa).

Residues asparagine 64, asparagine 95, and 142–149 (GTNGVGLK) contribute to the ATP site. Residues glutamate 438, aspartate 539, and aspartate 541 each contribute to the Mg(2+) site. Positions 707–1174 (IPNFLDGMTR…PGASVWLEEI (468 aa)) constitute a Topo IIA-type catalytic domain. The active-site O-(5'-phospho-DNA)-tyrosine intermediate is tyrosine 800.

It belongs to the type II topoisomerase family. It depends on Mg(2+) as a cofactor. Requires Mn(2+) as cofactor. The cofactor is Ca(2+).

The protein localises to the host cytoplasm. It carries out the reaction ATP-dependent breakage, passage and rejoining of double-stranded DNA.. Its function is as follows. Type II topoisomerase. Processively relaxes supercoiled DNA. Displays DNA-supercoiling activity only when associated with the viral histone-like protein. The sequence is that of DNA topoisomerase 2 from African swine fever virus (isolate Tick/South Africa/Pretoriuskop Pr4/1996) (ASFV).